We begin with the raw amino-acid sequence, 406 residues long: Cysteine desulfurase (406 aa).

The residue at position 226 (lysine 226) is an N6-(pyridoxal phosphate)lysine. Cysteine 364 serves as the catalytic Cysteine persulfide intermediate.

The protein belongs to the class-V pyridoxal-phosphate-dependent aminotransferase family. Csd subfamily. As to quaternary structure, homodimer. Interacts with SufE and the SufBCD complex composed of SufB, SufC and SufD. The interaction with SufE is required to mediate the direct transfer of the sulfur atom from the S-sulfanylcysteine. Pyridoxal 5'-phosphate is required as a cofactor.

The protein resides in the cytoplasm. The enzyme catalyses (sulfur carrier)-H + L-cysteine = (sulfur carrier)-SH + L-alanine. It carries out the reaction L-selenocysteine + AH2 = hydrogenselenide + L-alanine + A + H(+). Its pathway is cofactor biosynthesis; iron-sulfur cluster biosynthesis. Cysteine desulfurases mobilize the sulfur from L-cysteine to yield L-alanine, an essential step in sulfur metabolism for biosynthesis of a variety of sulfur-containing biomolecules. Component of the suf operon, which is activated and required under specific conditions such as oxidative stress and iron limitation. Acts as a potent selenocysteine lyase in vitro, that mobilizes selenium from L-selenocysteine. Selenocysteine lyase activity is however unsure in vivo. This Yersinia pestis bv. Antiqua (strain Antiqua) protein is Cysteine desulfurase.